A 283-amino-acid polypeptide reads, in one-letter code: Large ribosomal subunit protein uL2 (283 aa).

Disordered regions lie at residues 37–59 (AKKKKNSGRNNQGKITVRHRGGG) and 219–283 (HKGI…RNSK). Residues 256–269 (WGKRHMGVKTRNNK) are compositionally biased toward basic residues.

The protein belongs to the universal ribosomal protein uL2 family. Part of the 50S ribosomal subunit. Forms a bridge to the 30S subunit in the 70S ribosome.

In terms of biological role, one of the primary rRNA binding proteins. Required for association of the 30S and 50S subunits to form the 70S ribosome, for tRNA binding and peptide bond formation. It has been suggested to have peptidyltransferase activity; this is somewhat controversial. Makes several contacts with the 16S rRNA in the 70S ribosome. The sequence is that of Large ribosomal subunit protein uL2 from Mycoplasmoides gallisepticum (strain R(low / passage 15 / clone 2)) (Mycoplasma gallisepticum).